The chain runs to 198 residues: dTTP/UTP pyrophosphatase (198 aa).

Residue Asp-75 is the Proton acceptor of the active site.

This sequence belongs to the Maf family. YhdE subfamily. Requires a divalent metal cation as cofactor.

It localises to the cytoplasm. It carries out the reaction dTTP + H2O = dTMP + diphosphate + H(+). The enzyme catalyses UTP + H2O = UMP + diphosphate + H(+). In terms of biological role, nucleoside triphosphate pyrophosphatase that hydrolyzes dTTP and UTP. May have a dual role in cell division arrest and in preventing the incorporation of modified nucleotides into cellular nucleic acids. This is dTTP/UTP pyrophosphatase from Wolbachia sp. subsp. Drosophila simulans (strain wRi).